An 822-amino-acid chain; its full sequence is Valine--tRNA ligase (822 aa).

Positions 41-51 (PNVTGQLHLGH) match the 'HIGH' region motif. The 'KMSKS' region motif lies at 511-515 (KMSKS). ATP is bound at residue K514. Positions 765–822 (EQKGRELKEIQFLKSEILRAEKILTNKGFLEKAPREKIDLERTKLEKLKEKLVFYEKK) form a coiled coil.

The protein belongs to the class-I aminoacyl-tRNA synthetase family. ValS type 1 subfamily. Monomer.

It is found in the cytoplasm. The enzyme catalyses tRNA(Val) + L-valine + ATP = L-valyl-tRNA(Val) + AMP + diphosphate. In terms of biological role, catalyzes the attachment of valine to tRNA(Val). As ValRS can inadvertently accommodate and process structurally similar amino acids such as threonine, to avoid such errors, it has a 'posttransfer' editing activity that hydrolyzes mischarged Thr-tRNA(Val) in a tRNA-dependent manner. This chain is Valine--tRNA ligase, found in Mesomycoplasma hyopneumoniae (strain J / ATCC 25934 / NCTC 10110) (Mycoplasma hyopneumoniae).